Consider the following 105-residue polypeptide: Secreted effector protein PINE1 (105 aa).

The first 21 residues, 1 to 21, serve as a signal peptide directing secretion; it reads MKLSQPLSIFAILAASTVAVA.

Interacts with Arabidopsis thaliana PGIP1.

It localises to the secreted. Its function is as follows. Effector protein required for full virulence. Directly interacts with and functionally inactivates PG-inhibiting proteins (PGIPs). PGIPs are a defense mechanism of infected plants, that inhibit the plant pathogens secreted polygalacturonases (PGs) used to degrade the plant cell wall. Excerts its function by interacting with host PGIPs to negate their polygalacturonase-inhibiting function via enhanced dissociation of PGIPs from PGs. The sequence is that of Secreted effector protein PINE1 from Sclerotinia sclerotiorum (strain ATCC 18683 / 1980 / Ss-1) (White mold).